A 519-amino-acid polypeptide reads, in one-letter code: SMR domain-containing protein At5g58720 (519 aa).

The span at 1–15 (MKQKNQHKKKKKRSC) shows a compositional bias: basic residues. Disordered stretches follow at residues 1 to 47 (MKQK…REIE) and 92 to 128 (ESGD…CSED). Residues 28-47 (GNKKDVEEERKDGEGKREIE) show a composition bias toward basic and acidic residues. The span at 98-127 (STSSVASGSSGQETASTSEYGAGSSSSCSE) shows a compositional bias: low complexity. The 75-residue stretch at 428–502 (IDLHGQHVKP…NRGTLLIKLD (75 aa)) folds into the Smr domain.

As to quaternary structure, interacts with PRL1.

The protein is SMR domain-containing protein At5g58720 of Arabidopsis thaliana (Mouse-ear cress).